We begin with the raw amino-acid sequence, 441 residues long: Methionine aminopeptidase 2A (441 aa).

The interval 1 to 103 is disordered; sequence MAIGNPEVAT…SGDFPQGEIQ (103 aa). Residues 18 to 33 show a composition bias toward polar residues; it reads AESSNGNESQLSSDLT. Positions 37-62 are enriched in basic and acidic residues; it reads DLAEVKEDEKDNNQEEEDGLKAEAST. Basic residues predominate over residues 63–76; sequence KKKKKKSKSKKKKS. H194 contributes to the substrate binding site. A divalent metal cation contacts are provided by D214, D225, and H294. H302 contacts substrate. Residues E327 and E422 each contribute to the a divalent metal cation site.

Belongs to the peptidase M24A family. Methionine aminopeptidase eukaryotic type 2 subfamily. Co(2+) serves as cofactor. Zn(2+) is required as a cofactor. It depends on Mn(2+) as a cofactor. The cofactor is Fe(2+). As to expression, ubiquitous. Preferentially expressed in roots.

The protein resides in the cytoplasm. The catalysed reaction is Release of N-terminal amino acids, preferentially methionine, from peptides and arylamides.. In terms of biological role, cotranslationally removes the N-terminal methionine from nascent proteins. The N-terminal methionine is often cleaved when the second residue in the primary sequence is small and uncharged (Met-Ala-, Cys, Gly, Pro, Ser, Thr, or Val). In Arabidopsis thaliana (Mouse-ear cress), this protein is Methionine aminopeptidase 2A.